We begin with the raw amino-acid sequence, 476 residues long: Aspartyl/glutamyl-tRNA(Asn/Gln) amidotransferase subunit B (476 aa).

The protein belongs to the GatB/GatE family. GatB subfamily. Heterotrimer of A, B and C subunits.

It carries out the reaction L-glutamyl-tRNA(Gln) + L-glutamine + ATP + H2O = L-glutaminyl-tRNA(Gln) + L-glutamate + ADP + phosphate + H(+). It catalyses the reaction L-aspartyl-tRNA(Asn) + L-glutamine + ATP + H2O = L-asparaginyl-tRNA(Asn) + L-glutamate + ADP + phosphate + 2 H(+). In terms of biological role, allows the formation of correctly charged Asn-tRNA(Asn) or Gln-tRNA(Gln) through the transamidation of misacylated Asp-tRNA(Asn) or Glu-tRNA(Gln) in organisms which lack either or both of asparaginyl-tRNA or glutaminyl-tRNA synthetases. The reaction takes place in the presence of glutamine and ATP through an activated phospho-Asp-tRNA(Asn) or phospho-Glu-tRNA(Gln). The chain is Aspartyl/glutamyl-tRNA(Asn/Gln) amidotransferase subunit B from Clostridium botulinum (strain ATCC 19397 / Type A).